Reading from the N-terminus, the 1189-residue chain is Zinc finger CCCH domain-containing protein 6 (1189 aa).

Positions Met1–Glu12 are enriched in basic and acidic residues. Residues Met1–Asp105 form a disordered region. The segment covering Asp13 to Glu28 has biased composition (acidic residues). Residues Glu27–Asn73 are a coiled coil. The segment covering Ile29–Tyr46 has biased composition (basic and acidic residues). Over residues Arg47–Asn73 the composition is skewed to basic residues. 3 consecutive C3H1-type zinc fingers follow at residues Lys273–Glu299, Glu301–Phe328, and Pro329–Leu352. Residues Thr353–Gly385 adopt a coiled-coil conformation. Disordered stretches follow at residues Phe451–Asn530, Pro630–Gly659, Tyr676–Val755, Leu947–Pro1026, and Pro1051–Cys1189. Positions Gln461–Ser478 are enriched in low complexity. Residues Ala505–Ile525 show a composition bias toward pro residues. The segment covering His639–Gly659 has biased composition (low complexity). Positions Lys718–Thr741 are enriched in polar residues. Residues Gly961–Leu973 show a composition bias toward basic and acidic residues. 2 stretches are compositionally biased toward low complexity: residues Ser1009 to Ala1020 and Ser1056 to Glu1069. The residue at position 1158 (Ser1158) is a Phosphoserine. The span at Asp1164–Lys1179 shows a compositional bias: basic and acidic residues.

This chain is Zinc finger CCCH domain-containing protein 6 (ZC3H6), found in Homo sapiens (Human).